Here is a 216-residue protein sequence, read N- to C-terminus: Adenylate kinase (216 aa).

An ATP-binding site is contributed by 10–15 (GAGKGT). The segment at 30–59 (STGDIFRANIKEKTPLGIEAKRYIDNGQLV) is NMP. Residues Thr31, Arg36, 57–59 (QLV), 85–88 (GFPR), and Gln92 contribute to the AMP site. Positions 126 to 163 (GRRVCTSCGASYHIRFNPPKIEGKCDICDNELIQRKDD) are LID. An ATP-binding site is contributed by Arg127. Zn(2+) is bound by residues Cys130 and Cys133. 136 to 137 (SY) is an ATP binding site. Residues Cys150 and Cys153 each contribute to the Zn(2+) site. Residues Arg160 and Arg171 each coordinate AMP. An ATP-binding site is contributed by Glu199.

Belongs to the adenylate kinase family. Monomer.

Its subcellular location is the cytoplasm. The catalysed reaction is AMP + ATP = 2 ADP. Its pathway is purine metabolism; AMP biosynthesis via salvage pathway; AMP from ADP: step 1/1. Catalyzes the reversible transfer of the terminal phosphate group between ATP and AMP. Plays an important role in cellular energy homeostasis and in adenine nucleotide metabolism. The protein is Adenylate kinase of Clostridium botulinum (strain ATCC 19397 / Type A).